The primary structure comprises 476 residues: MTAATKSLKQDYAIADLSLADWGRKEIRIAESEMPALMAIREEYAKTQPLKGARVTGSLHMTIQTAVLVETLQALGAEVRWASCNIFSTQDHAAAALVQAGTPVFAHKGESLKEYWDFTHRIFDFGPAGSDHEGPNMILDDGGDATLLMHLGKRAEKDASVLANPQSEEERELYAAIKAKLAEDATWYTRKSAKILGVTEETTTGVHRLQEMSAKGTLLFRAINVNDSVTKSKFDNLYGCRESLVDGIKRATDVMVAGKIAVVAGYGDVGKGSAQALRALSAQVWVTEIDPICALQAAMEGYRVVTMDYAADKADIFVTATGNKGVITHDHMAKMKDQAIVCNIGHFDNEIEVASLEKYKWEEIKPQVDHIIFPDNKRIILLAKGRLVNLGCGTGHPSYVMSSSFANQTIAQIELYSHSANYEVGKVYVLPKHLDEKVARLQLKKLNAQLTELSQEQADYIGVKTSGPYKPDTYRY.

Substrate contacts are provided by Thr62, Asp141, and Glu201. Residue Thr202–Thr204 coordinates NAD(+). 2 residues coordinate substrate: Lys231 and Asp235. NAD(+) contacts are provided by residues Asn236, Gly265 to Gly270, Glu288, Asn323, Ile344 to His346, and Asn389.

The protein belongs to the adenosylhomocysteinase family. The cofactor is NAD(+).

The protein localises to the cytoplasm. It carries out the reaction S-adenosyl-L-homocysteine + H2O = L-homocysteine + adenosine. It functions in the pathway amino-acid biosynthesis; L-homocysteine biosynthesis; L-homocysteine from S-adenosyl-L-homocysteine: step 1/1. Its function is as follows. May play a key role in the regulation of the intracellular concentration of adenosylhomocysteine. This is Adenosylhomocysteinase from Myxococcus xanthus (strain DK1622).